Here is a 163-residue protein sequence, read N- to C-terminus: D-aminoacyl-tRNA deacylase (163 aa).

Residues 141 to 142 (GP) carry the Gly-cisPro motif, important for rejection of L-amino acids motif.

It belongs to the DTD family. As to quaternary structure, homodimer.

It localises to the cytoplasm. It catalyses the reaction glycyl-tRNA(Ala) + H2O = tRNA(Ala) + glycine + H(+). The catalysed reaction is a D-aminoacyl-tRNA + H2O = a tRNA + a D-alpha-amino acid + H(+). An aminoacyl-tRNA editing enzyme that deacylates mischarged D-aminoacyl-tRNAs. Also deacylates mischarged glycyl-tRNA(Ala), protecting cells against glycine mischarging by AlaRS. Acts via tRNA-based rather than protein-based catalysis; rejects L-amino acids rather than detecting D-amino acids in the active site. By recycling D-aminoacyl-tRNA to D-amino acids and free tRNA molecules, this enzyme counteracts the toxicity associated with the formation of D-aminoacyl-tRNA entities in vivo and helps enforce protein L-homochirality. In Neisseria meningitidis serogroup A / serotype 4A (strain DSM 15465 / Z2491), this protein is D-aminoacyl-tRNA deacylase.